A 484-amino-acid chain; its full sequence is Crt homolog 2 (484 aa).

Over 1 to 57 (MSEEKLPLLSPLNENDIENDYKDENLKSDLDKLSNVKKQSIIQRFKDYLKNSISKQT) the chain is Cytoplasmic. The chain crosses the membrane as a helical span at residues 58-78 (ATVLVYVVLYILSGVINSLLL). The Vacuolar portion of the chain corresponds to 79–94 (KKVMNVFTNYGFFLNQ). Residues 95–115 (LTNYGYVPIFGAIVLYKILFT) traverse the membrane as a helical segment. At 116 to 128 (NDIPKDTRSFPQW) the chain is on the cytoplasmic side. The chain crosses the membrane as a helical span at residues 129 to 149 (KFVIMGALDAVTGYFVVIGGI). At 150–154 (KTTGP) the chain is on the vacuolar side. Residues 155–175 (LQQLLNQSVIPFTMLLSFIFL) traverse the membrane as a helical segment. Over 176-178 (KER) the chain is Cytoplasmic. Residues 179 to 199 (YSLIQLGGALIIIGGVVVSLI) form a helical membrane-spanning segment. The Vacuolar portion of the chain corresponds to 200-210 (PSLTGGNTSGN). N-linked (GlcNAc...) asparagine glycosylation occurs at asparagine 206. A helical membrane pass occupies residues 211–231 (MLFYNFFYLISMIPYAFSNVY). The Cytoplasmic segment spans residues 232–244 (KAIGFSTVEDMDV). Residues 245 to 265 (WYLQYFDALYQSLVGTVLFPI) form a helical membrane-spanning segment. Residues 266–328 (NNWLPPPSDM…LGCDNCHGAW (63 aa)) lie on the Vacuolar side of the membrane. An N-linked (GlcNAc...) asparagine glycan is attached at asparagine 302. The helical transmembrane segment at 329–349 (VVVLIYMAVNVLYNVFILLVL) threads the bilayer. Topologically, residues 350–355 (KHAGAT) are cytoplasmic. A helical membrane pass occupies residues 356-378 (VFSIANTLRLPLTNIAFSFKFIM). Topologically, residues 379–382 (GSDS) are vacuolar. The helical transmembrane segment at 383 to 403 (NPFSGLSVAGLCIILLGLGGY) threads the bilayer. Topologically, residues 404 to 484 (RVGSMIKQKK…RNQNSIYGDQ (81 aa)) are cytoplasmic.

Belongs to the CRT-like transporter family.

It is found in the vacuole membrane. Its function is as follows. Nutrient transporter. Involved in maintaining the osmotic homeostasis of the digestive vacuole. This is Crt homolog 2 (crtp2) from Dictyostelium discoideum (Social amoeba).